A 688-amino-acid chain; its full sequence is Glycine--tRNA ligase beta subunit (688 aa).

The protein belongs to the class-II aminoacyl-tRNA synthetase family. As to quaternary structure, tetramer of two alpha and two beta subunits.

The protein resides in the cytoplasm. It catalyses the reaction tRNA(Gly) + glycine + ATP = glycyl-tRNA(Gly) + AMP + diphosphate. The protein is Glycine--tRNA ligase beta subunit of Haemophilus influenzae (strain PittGG).